The following is a 333-amino-acid chain: Serine/threonine-protein phosphatase PP1-beta (333 aa).

Positions 63, 65, 91, and 123 each coordinate Mn(2+). His-124 serves as the catalytic Proton donor. Mn(2+) is bound by residues His-172 and His-247. Residues 306–333 (GAGGVGSNRPVTPPRNAPAAQPKKGAKK) form a disordered region. Residues 322–333 (APAAQPKKGAKK) show a composition bias toward low complexity.

The protein belongs to the PPP phosphatase family. PP-1 subfamily. As to quaternary structure, interacts with lab-1; the interaction is direct. Interacts with knl-1; the interaction is direct. The cofactor is Mn(2+).

The protein resides in the cytoplasm. It is found in the nucleus. It catalyses the reaction O-phospho-L-seryl-[protein] + H2O = L-seryl-[protein] + phosphate. It carries out the reaction O-phospho-L-threonyl-[protein] + H2O = L-threonyl-[protein] + phosphate. Its function is as follows. Serine/threonine-protein phosphatase essential for chromosomal dynamics during meiosis and mitosis. Antagonizes the function of air-2 in the regulation of chromosome cohesion. Dephosphorylates histone H3 at 'Ser-10'. Also involved in the activation of chloride channel clh-3 during cell swelling and meiotic maturation. Essential for embryogenesis. This chain is Serine/threonine-protein phosphatase PP1-beta (gsp-2), found in Caenorhabditis briggsae.